A 142-amino-acid chain; its full sequence is Type II secretion system core protein G (142 aa).

A propeptide spans 1 to 8 (leader sequence); that stretch reads MRRQSQRG. Residue phenylalanine 9 is modified to N-methylphenylalanine. Residues 9–29 form a helical membrane-spanning segment; it reads FTLLEIMVVIVIMGILASLVV. The segment at 122 to 142 is disordered; that stretch reads SGQDGVPGTDDDIGNWTLSKK.

The protein belongs to the GSP G family. In terms of assembly, type II secretion system is composed of four main components: the outer membrane complex, the inner membrane complex, the cytoplasmic secretion ATPase and the periplasm-spanning pseudopilus. Forms homomultimers. Post-translationally, cleaved by the prepilin peptidase. In terms of processing, methylated by prepilin peptidase at the amino group of the N-terminal phenylalanine once the leader sequence is cleaved.

The protein localises to the cell inner membrane. Core component of the type II secretion system required for the energy-dependent secretion of extracellular factors such as proteases and toxins from the periplasm. Pseudopilin (pilin-like) protein that polymerizes to form the pseudopilus. Further polymerization triggers pseudopilus growth. The sequence is that of Type II secretion system core protein G from Klebsiella michiganensis (strain ATCC 8724 / DSM 4798 / JCM 20051 / NBRC 3318 / NRRL B-199 / KCTC 1686 / BUCSAV 143 / CCM 1901).